The following is a 144-amino-acid chain: Probable DNA-directed RNA polymerases I and III subunit RPAC2 (144 aa).

The segment at 14–47 is disordered; the sequence is KVEAETMEVDEQPQETPQVDDEEDLNVPSKKKME. A compositionally biased stretch (acidic residues) spans 18–38; sequence ETMEVDEQPQETPQVDDEEDL.

Belongs to the archaeal Rpo11/eukaryotic RPB11/RPC19 RNA polymerase subunit family. Component of the RNA polymerase I (Pol I) and RNA polymerase III (Pol III) complexes consisting of at least 13 and 17 subunits, respectively.

The protein localises to the nucleus. DNA-dependent RNA polymerase catalyzes the transcription of DNA into RNA using the four ribonucleoside triphosphates as substrates. Common core component of RNA polymerases I and III which synthesize ribosomal RNA precursors and small RNAs, such as 5S rRNA and tRNAs, respectively. This Caenorhabditis elegans protein is Probable DNA-directed RNA polymerases I and III subunit RPAC2 (rpac-19).